The primary structure comprises 170 residues: Adenine phosphoribosyltransferase (170 aa).

The protein belongs to the purine/pyrimidine phosphoribosyltransferase family. Homodimer.

It is found in the cytoplasm. The enzyme catalyses AMP + diphosphate = 5-phospho-alpha-D-ribose 1-diphosphate + adenine. Its pathway is purine metabolism; AMP biosynthesis via salvage pathway; AMP from adenine: step 1/1. Functionally, catalyzes a salvage reaction resulting in the formation of AMP, that is energically less costly than de novo synthesis. This Mycoplasmopsis agalactiae (strain NCTC 10123 / CIP 59.7 / PG2) (Mycoplasma agalactiae) protein is Adenine phosphoribosyltransferase.